Here is a 227-residue protein sequence, read N- to C-terminus: Uracil-DNA glycosylase (227 aa).

The Proton acceptor role is filled by D68.

This sequence belongs to the uracil-DNA glycosylase (UDG) superfamily. UNG family.

The protein localises to the cytoplasm. The enzyme catalyses Hydrolyzes single-stranded DNA or mismatched double-stranded DNA and polynucleotides, releasing free uracil.. Its function is as follows. Excises uracil residues from the DNA which can arise as a result of misincorporation of dUMP residues by DNA polymerase or due to deamination of cytosine. This is Uracil-DNA glycosylase from Mycobacterium ulcerans (strain Agy99).